The primary structure comprises 578 residues: Monooxygenase cfoE (578 aa).

Residues 549-569 traverse the membrane as a helical segment; the sequence is IVLSGVPLVVFGSLHLVLWIF.

It belongs to the FMO family. Requires FAD as cofactor.

Its subcellular location is the membrane. Its pathway is secondary metabolite biosynthesis; flavonoid biosynthesis. Functionally, monooxygenase; part of the gene cluster that mediates the biosynthesis of chlorflavonin, a fungal flavonoid with acetolactate synthase inhibitory activity. Within the pathway, cfoE is responsible for the chlorination of the flavonoid skeleton at position C3'. The pathway begins with the PKS-NRPS hybrid synthetase cfoA that uses benzoic acid or p-hydroxybenzoic acid as a starter unit with four rounds of chain elongation using malonyl-CoA to form the chalcone skeleton. Then, a new type of chalcone isomerase, cfoK, catalyzes the conversion of the chalcone into a flavanone by a histidine-mediated oxa-Michael addition mechanism. The desaturation of flavanone to flavone is catalyzed by a new type of flavone synthase, the flavin mononucleotide (FMN)-dependent oxidoreductase cfoJ. Monooxygenases cfoF, cfoG, and P450 cfoH are responsible for the hydroxylation of the flavonoid skeleton at sites C3, C8, and C2', respectively. Like cfoF, the dehydratase cfoI plays also a role in the hydroxylation of position C3. Methyltransferases cfoB, cfoC, and cfoD then catalyze the methylation of C7-OH, C8-OH, and C3-OH, respectively. Finally, the monooxygenase cfoE is responsible for the chlorination of flavonoid at position C3'. The polypeptide is Monooxygenase cfoE (Aspergillus candidus).